Reading from the N-terminus, the 214-residue chain is Cytochrome b (214 aa).

Helical transmembrane passes span 31–51 (FGSM…FLAI), 75–96 (WIMQ…YIHI), 111–131 (WLSG…GYVL), and 176–196 (FFAL…IHIL). H81 and H95 together coordinate heme b. Heme b is bound by residues H180 and H194. An a ubiquinone-binding site is contributed by H199.

It belongs to the cytochrome b family. The cytochrome bc1 complex contains 3 respiratory subunits (MT-CYB, CYC1 and UQCRFS1), 2 core proteins (UQCRC1 and UQCRC2) and probably 6 low-molecular weight proteins. It depends on heme b as a cofactor.

It localises to the mitochondrion inner membrane. Component of the ubiquinol-cytochrome c reductase complex (complex III or cytochrome b-c1 complex) that is part of the mitochondrial respiratory chain. The b-c1 complex mediates electron transfer from ubiquinol to cytochrome c. Contributes to the generation of a proton gradient across the mitochondrial membrane that is then used for ATP synthesis. This Agkistrodon contortrix contortrix (Southern copperhead) protein is Cytochrome b (MT-CYB).